The following is a 238-amino-acid chain: Opacity protein opA66 (238 aa).

Alanine 1 is a signal peptide. Disordered regions lie at residues 88–109 (NLQR…QENG) and 162–183 (GARG…AHQE). The span at 168 to 183 (PTVSSPYKNTQDAHQE) shows a compositional bias: polar residues.

The protein belongs to the opacity porin family.

It is found in the cell outer membrane. In terms of biological role, implicated in a number of adherence functions. OPA proteins are implicated in pathogenesis and are subject to phase variation. The protein is Opacity protein opA66 of Neisseria gonorrhoeae.